A 2489-amino-acid chain; its full sequence is Protein YPR117W (2489 aa).

The next 2 helical transmembrane spans lie at 19-39 and 128-148; these read FMLF…WILM and VLSI…LALT. Asparagine 191, asparagine 210, asparagine 311, asparagine 452, asparagine 468, asparagine 605, asparagine 638, asparagine 663, asparagine 698, asparagine 789, asparagine 835, asparagine 981, asparagine 1255, asparagine 1404, and asparagine 1476 each carry an N-linked (GlcNAc...) asparagine glycan. Positions 1610 to 1676 form a coiled coil; sequence LTQEKLATER…RLHTVNTILS (67 aa). Residues 1685–1704 are disordered; it reads PGGNTDGDSSSSLSDTDVNL. The span at 1690–1704 shows a compositional bias: low complexity; the sequence is DGDSSSSLSDTDVNL. N-linked (GlcNAc...) asparagine glycans are attached at residues asparagine 1978 and asparagine 2189. Residues serine 2254 and serine 2278 each carry the phosphoserine modification. Residue asparagine 2279 is glycosylated (N-linked (GlcNAc...) asparagine). Positions 2451–2471 are enriched in polar residues; that stretch reads SSTHSSDIRSINSDETYNEND. The segment at 2451–2489 is disordered; it reads SSTHSSDIRSINSDETYNENDGNGVKPFYPVTSEFSKNK.

The protein resides in the cell membrane. The protein localises to the endoplasmic reticulum membrane. It localises to the mitochondrion membrane. Tube-forming lipid transport protein which may bind to phosphatidylinositols and may affect phosphatidylinositol-4,5-bisphosphate (PtdIns-4,5-P2) distribution. This Saccharomyces cerevisiae (strain ATCC 204508 / S288c) (Baker's yeast) protein is Protein YPR117W.